The primary structure comprises 162 residues: NADH-quinone oxidoreductase subunit I 1 (162 aa).

4Fe-4S ferredoxin-type domains lie at 52–82 (LRRYPNGEERCIACKLCEAVCPAQAITIEAG) and 93–122 (VRYDIDMVKCIYCGFCQEACPVDAIVEGPN). [4Fe-4S] cluster contacts are provided by C62, C65, C68, C72, C102, C105, C108, and C112.

This sequence belongs to the complex I 23 kDa subunit family. In terms of assembly, NDH-1 is composed of 14 different subunits. Subunits NuoA, H, J, K, L, M, N constitute the membrane sector of the complex. Requires [4Fe-4S] cluster as cofactor.

Its subcellular location is the cell inner membrane. The enzyme catalyses a quinone + NADH + 5 H(+)(in) = a quinol + NAD(+) + 4 H(+)(out). In terms of biological role, NDH-1 shuttles electrons from NADH, via FMN and iron-sulfur (Fe-S) centers, to quinones in the respiratory chain. The immediate electron acceptor for the enzyme in this species is believed to be ubiquinone. Couples the redox reaction to proton translocation (for every two electrons transferred, four hydrogen ions are translocated across the cytoplasmic membrane), and thus conserves the redox energy in a proton gradient. The protein is NADH-quinone oxidoreductase subunit I 1 of Rhodopseudomonas palustris (strain ATCC BAA-98 / CGA009).